The sequence spans 187 residues: Reactive Intermediate Deaminase A, chloroplastic (187 aa).

Residues 1 to 58 (MTWSVFRSINTPTLDLSTALRSTRTPLVAAGVGCATFAGVSLFRMSSRSPPFASLSVS) constitute a chloroplast transit peptide. Arginine 165 is a substrate binding site.

It belongs to the RutC family. Expressed in leaves, petiols, petals, carpels and shoot apex.

It is found in the plastid. Its subcellular location is the chloroplast. The enzyme catalyses 2-iminobutanoate + H2O = 2-oxobutanoate + NH4(+). It carries out the reaction 2-iminopropanoate + H2O = pyruvate + NH4(+). Its pathway is amino-acid biosynthesis; L-isoleucine biosynthesis; 2-oxobutanoate from L-threonine. Its function is as follows. Hydrolyzes the Ser-derived enamine/imine product of Thr dehydratase, protecting the plastidial branched-chain aminotransferase BCAT3 (AC Q9M401) from inactivation. Involved in Ile biosynthesis. The polypeptide is Reactive Intermediate Deaminase A, chloroplastic (Arabidopsis thaliana (Mouse-ear cress)).